We begin with the raw amino-acid sequence, 211 residues long: Large ribosomal subunit protein uL3 (211 aa).

Residue Gln150 is modified to N5-methylglutamine.

This sequence belongs to the universal ribosomal protein uL3 family. As to quaternary structure, part of the 50S ribosomal subunit. Forms a cluster with proteins L14 and L19. In terms of processing, methylated by PrmB.

In terms of biological role, one of the primary rRNA binding proteins, it binds directly near the 3'-end of the 23S rRNA, where it nucleates assembly of the 50S subunit. The sequence is that of Large ribosomal subunit protein uL3 from Pseudomonas fluorescens (strain SBW25).